The sequence spans 794 residues: Elongator complex protein 2 (794 aa).

WD repeat units follow at residues 55-93, 98-140, 147-188, 203-244, 286-328, 337-376, 384-423, 433-472, 557-601, 604-643, 654-693, 705-751, and 759-794; these read EHTK…TTKS, GHTS…YVCF, DGFC…AGEG, GHED…KEQM, GHEG…IWLE, GNSV…PQLW, GHYG…GANP, IHGY…ENFR, GHGY…QIQK, GHQL…VSYQ, VHTR…KESS, LKNE…WKLL, and AHHL…IKLT.

Belongs to the WD repeat ELP2 family. As to quaternary structure, component of the elongator complex composed of Elp1, Elp2, Elp3, Elp4, Elp5 and Elp6. The elongator complex associates with and stabilizes microtubules; efficient interaction requires the full complex.

It localises to the cytoplasm. The protein resides in the nucleus. Its subcellular location is the cytoskeleton. It is found in the spindle. Its pathway is tRNA modification; 5-methoxycarbonylmethyl-2-thiouridine-tRNA biosynthesis. In terms of biological role, component of the elongator complex, which is required for multiple tRNA modifications, including mcm5U (5-methoxycarbonylmethyl uridine), mcm5s2U (5-methoxycarbonylmethyl-2-thiouridine), and ncm5U (5-carbamoylmethyl uridine). The elongator complex catalyzes the formation of carboxymethyluridine in the wobble base at position 34 in tRNAs. Binding by the elongator complex stabilizes microtubules and promotes their growth. This induces central spindle asymmetry, promoting polarized signaling endosome trafficking during asymmetric cell division and cell fate assignation of sensory organ precursor cells. Involved in the regulation of the STAT pathway. This is Elongator complex protein 2 from Drosophila melanogaster (Fruit fly).